The sequence spans 108 residues: Replication restart protein PriB (108 aa).

The region spanning 8–108 is the SSB domain; that stretch reads VDNRFSLIGK…LHAEQIEFIE (101 aa).

This sequence belongs to the PriB family. As to quaternary structure, homodimer. Interacts with PriA and DnaT. Component of the replication restart primosome. Primosome assembly occurs via a 'hand-off' mechanism. PriA binds to replication forks, subsequently PriB then DnaT bind; DnaT then displaces ssDNA to generate the helicase loading substrate.

Its function is as follows. Involved in the restart of stalled replication forks, which reloads the replicative helicase on sites other than the origin of replication; the PriA-PriB pathway is the major replication restart pathway. During primosome assembly it facilitates complex formation between PriA and DnaT on DNA; stabilizes PriA on DNA. Stimulates the DNA unwinding activity of PriA helicase. The chain is Replication restart protein PriB from Histophilus somni (strain 129Pt) (Haemophilus somnus).